A 187-amino-acid chain; its full sequence is Shikimate kinase (187 aa).

19-24 contributes to the ATP binding site; the sequence is GSGKST. Position 23 (serine 23) interacts with Mg(2+). Substrate contacts are provided by aspartate 41, arginine 65, and glycine 87. Residue arginine 124 participates in ATP binding. Arginine 143 contacts substrate. Residue arginine 160 participates in ATP binding.

It belongs to the shikimate kinase family. In terms of assembly, monomer. It depends on Mg(2+) as a cofactor.

It localises to the cytoplasm. It carries out the reaction shikimate + ATP = 3-phosphoshikimate + ADP + H(+). Its pathway is metabolic intermediate biosynthesis; chorismate biosynthesis; chorismate from D-erythrose 4-phosphate and phosphoenolpyruvate: step 5/7. Catalyzes the specific phosphorylation of the 3-hydroxyl group of shikimic acid using ATP as a cosubstrate. This is Shikimate kinase from Rippkaea orientalis (strain PCC 8801 / RF-1) (Cyanothece sp. (strain PCC 8801)).